The primary structure comprises 541 residues: Malate synthase (541 aa).

The Proton acceptor role is filled by Arg-172. The Proton donor role is filled by Asp-452.

The protein belongs to the malate synthase family.

The protein resides in the cytoplasm. It carries out the reaction glyoxylate + acetyl-CoA + H2O = (S)-malate + CoA + H(+). The protein operates within carbohydrate metabolism; glyoxylate cycle; (S)-malate from isocitrate: step 2/2. The polypeptide is Malate synthase (mls) (Myxococcus xanthus (strain DK1622)).